A 332-amino-acid chain; its full sequence is Succinylglutamate desuccinylase (332 aa).

3 residues coordinate Zn(2+): His-59, Glu-62, and His-151. The active site involves Glu-215.

Belongs to the AspA/AstE family. Succinylglutamate desuccinylase subfamily. Requires Zn(2+) as cofactor.

It carries out the reaction N-succinyl-L-glutamate + H2O = L-glutamate + succinate. The protein operates within amino-acid degradation; L-arginine degradation via AST pathway; L-glutamate and succinate from L-arginine: step 5/5. Transforms N(2)-succinylglutamate into succinate and glutamate. This chain is Succinylglutamate desuccinylase, found in Pseudomonas aeruginosa (strain LESB58).